The sequence spans 962 residues: MSYKNYYTWKYPDIPEHVAPLLLELQNSLVIVGIIGRSKCAQANKMSAFGMQPDKTHEPADGQILCYYKPGTNMLLLHFETTHDEAVLGQQLLKQTSVDFDSFYEQMRSRFLRMLLLALHVCHILVYVETAQTFDTTLVTICQLLKYVREKHVLDFLPQMLRETAAGSLLSDRARLCTPRVLFLFENYPQDEEKSRERISAYEFQTEDKIYELLRQYNIVTNNANNSLFALPNNKQFVFYNAHEKLRPDQLLLAIEALNATMYKSDSKEEEEDTEILELAPFEGFVKPYGAGYEARESDEQLYRKKHTVWHFLQRHVQDALQGCFDEGSFKQLPQSAQFQLLGVNDWHICMDTIHRLLIGNIQEVSYVTNNQNYKAYLRDFNESLNYEKKFWGHLCDLGLKKGISAYKSSAPAIYGSVTHRQLLADAILAFEEEGRGPYAELALAKLSEICLRHWHDGRQQCEQLSLRGNPCTQPKDAPHDKHSSGIVHISSCNCGRTQGRREDPFTLRQANYDYYEHMAAMCNLCVKVKKFQLPVFTPSISDYRAAAFEAAFPLLLQAAKNRTEIATGGDSDLEAAGELYSQPINATEQAPQKPQITLSNGCSQPALSATYGSDLNMSIAGFGASLNEGEEVRSPEISSQIASSGLSSRSNSTSSGTSSANTANELVLQLKERTDQNAANAAVSEICPEALPIVASTEQVSTTEYLPGLVHMSSGCELLPLFPSWSLACVGPSSIYSHNTGLQEHFQSGFLSGANFLLPWDVHVRLVQPHKHPQQQQQSMGKKSQRYRKHGDRLALKIFVGFEYECSRGHRFMMCSPDRVLRGGADIERDTSSKVVNNNMPLYFPCPCRAQPTYLAQLMRIHVVTPKAPVNIILDPKMCVGKYTFTLGCPTLPRLSQSAYWILRLPYVYQGDNVLITPPERLEPDDNMASGCLLAGMFGIAETDTNETNQQAITPLTFTRL.

Residues Arg634–Ala661 are disordered. The segment covering Ser639 to Ala661 has biased composition (low complexity).

Belongs to the SMG8 family.

Involved in nonsense-mediated decay (NMD) of mRNAs containing premature stop codons. Probable component of kinase complex containing nonC and recruited to stalled ribosomes. The polypeptide is Nonsense-mediated mRNA decay factor SMG8 (Drosophila virilis (Fruit fly)).